A 346-amino-acid polypeptide reads, in one-letter code: NADH-ubiquinone oxidoreductase chain 2 (346 aa).

10 consecutive transmembrane segments (helical) span residues 25–45 (HWIL…PLIS), 52–72 (AIEA…LILF), 95–115 (CLML…HFWF), 124–144 (LITA…LLLL), 149–169 (LNTT…GWMG), 178–198 (ILAF…SYNP), 200–220 (LTIL…LSLA), 242–262 (ATVM…GFMP), 274–294 (EMTP…FFYL), and 326–346 (AILT…ITML).

This sequence belongs to the complex I subunit 2 family. Core subunit of respiratory chain NADH dehydrogenase (Complex I) which is composed of 45 different subunits.

Its subcellular location is the mitochondrion inner membrane. The catalysed reaction is a ubiquinone + NADH + 5 H(+)(in) = a ubiquinol + NAD(+) + 4 H(+)(out). In terms of biological role, core subunit of the mitochondrial membrane respiratory chain NADH dehydrogenase (Complex I) which catalyzes electron transfer from NADH through the respiratory chain, using ubiquinone as an electron acceptor. Essential for the catalytic activity and assembly of complex I. This Gallus gallus (Chicken) protein is NADH-ubiquinone oxidoreductase chain 2 (MT-ND2).